A 311-amino-acid polypeptide reads, in one-letter code: Geranylgeranyl transferase type-2 subunit beta (311 aa).

PFTB repeat units lie at residues 54–95 (KERI…AMLD), 102–143 (KDKV…AILG), 150–191 (KNTA…KILN), 197–239 (DEEL…AIIG), and 246–288 (RNQL…SLLQ). Geranylgeranyl diphosphate contacts are provided by residues 176-178 (HGA) and 218-230 (RPEK…YGWW). Zn(2+) contacts are provided by Asp-224, Cys-226, and His-276.

The protein belongs to the protein prenyltransferase subunit beta family. As to quaternary structure, heterodimer of an alpha and a beta subunit. Requires Zn(2+) as cofactor.

It carries out the reaction geranylgeranyl diphosphate + L-cysteinyl-[protein] = S-geranylgeranyl-L-cysteinyl-[protein] + diphosphate. Functionally, catalyzes the transfer of a geranyl-geranyl moiety from geranyl-geranyl pyrophosphate to proteins having the C-terminal -XCC or -XCXC, where both cysteines may become modified. The sequence is that of Geranylgeranyl transferase type-2 subunit beta (ptb1) from Schizosaccharomyces pombe (strain 972 / ATCC 24843) (Fission yeast).